Here is a 147-residue protein sequence, read N- to C-terminus: Small ribosomal subunit protein bS6 (147 aa).

The disordered stretch occupies residues 103-147; sequence AARMAANLPSFPEDEDTEEKGSAPLAREEEGIGEEAQTDEAEDKE. Residues 133–147 are compositionally biased toward acidic residues; that stretch reads GIGEEAQTDEAEDKE.

The protein belongs to the bacterial ribosomal protein bS6 family.

Functionally, binds together with bS18 to 16S ribosomal RNA. This chain is Small ribosomal subunit protein bS6, found in Syntrophobacter fumaroxidans (strain DSM 10017 / MPOB).